The sequence spans 241 residues: Triosephosphate isomerase (241 aa).

9–11 lines the substrate pocket; sequence NWK. Histidine 96 (electrophile) is an active-site residue. The active-site Proton acceptor is the glutamate 165. Substrate is bound by residues glycine 171, serine 204, and 225–226; that span reads GG.

This sequence belongs to the triosephosphate isomerase family. As to quaternary structure, homodimer.

Its subcellular location is the cytoplasm. It carries out the reaction D-glyceraldehyde 3-phosphate = dihydroxyacetone phosphate. It participates in carbohydrate biosynthesis; gluconeogenesis. It functions in the pathway carbohydrate degradation; glycolysis; D-glyceraldehyde 3-phosphate from glycerone phosphate: step 1/1. Functionally, involved in the gluconeogenesis. Catalyzes stereospecifically the conversion of dihydroxyacetone phosphate (DHAP) to D-glyceraldehyde-3-phosphate (G3P). The polypeptide is Triosephosphate isomerase (Trichodesmium erythraeum (strain IMS101)).